A 465-amino-acid chain; its full sequence is MKHIVKHIHFVGIGGAGMSGIAEVLVNLGYAVSGSDLSRNAVTDRLEALGARIAIGHDAANIEGANAVVVSTAVRSDNPEVLAARHQGVPIVQRAVMLAELMRLKQGIAIAGTHGKTTTTSLVASVLAAGGLDPTFVIGGRLISAGANARLGTGDFIVAEADESDASFLNLYPVIEVITNIDADHMDTYGHDFARLKQAFIEFTQRLPFYGSAVVCVDDPNVRQIIPFISKPVVRYGLSPDAQVRAEDIDARDGRMHFTVIREGRAPLAVVLNMPGLHNVQNALAAIAIATDLGVSDDAIQLALAEFNGVGRRFQRYGDVPSADGGQYTLIDDYGHHPVEMAATIAAARGAFPGRRLVLAFQPHRYTRTRDCFDDFVNVLSTVDALVLTEVYAAGEAAIPTASGDALSRALRAVGKVDPVFVATVDDVPDALAKVAQNGDVVITMGAGSIGGVPAKLVQHIQQKA.

ATP is bound at residue 112-118 (GTHGKTT).

Belongs to the MurCDEF family.

The protein localises to the cytoplasm. It catalyses the reaction UDP-N-acetyl-alpha-D-muramate + L-alanine + ATP = UDP-N-acetyl-alpha-D-muramoyl-L-alanine + ADP + phosphate + H(+). Its pathway is cell wall biogenesis; peptidoglycan biosynthesis. Cell wall formation. The protein is UDP-N-acetylmuramate--L-alanine ligase of Burkholderia orbicola (strain MC0-3).